We begin with the raw amino-acid sequence, 104 residues long: Enhancer of rudimentary homolog 1 (104 aa).

It belongs to the E(R) family. In terms of assembly, homodimer. Component of the erh1-mmi1 complex. Interacts with mmi1 (via N-terminus) in a 2:2 stoichiometry.

The protein resides in the nucleus. The protein localises to the cytoplasm. In terms of biological role, forms part of the erh1-mmi1 complex that recruits the CCR4-NOT complex and the NURS complex to target RNAs. Suppresses the meiotic program during vegetative growth and promotes the meiotic program during mating. Recruitment of the NURS complex to target mRNAs promotes mRNA decay by engagement of the nuclear exosome, and formation of heterochromatin islands at meiotic genes silenced by the exosome. Recruitment of the CCR4-NOT complex to target RNAs promotes heterochromatin formation at RNAi-dependent heterochromatin domains (HOODs), including a subset of meiotic genes, lncRNAs and retrotransposons. Recruitment of the CCR4-NOT complex to rDNA promotes rDNA heterochromatin assembly. The polypeptide is Enhancer of rudimentary homolog 1 (Schizosaccharomyces pombe (strain 972 / ATCC 24843) (Fission yeast)).